We begin with the raw amino-acid sequence, 597 residues long: tRNA uridine 5-carboxymethylaminomethyl modification enzyme MnmG (597 aa).

11 to 16 lines the FAD pocket; sequence GAGHAG. 275–289 lines the NAD(+) pocket; sequence SPRYCPSIEEKIERY.

It belongs to the MnmG family. In terms of assembly, homodimer. Heterotetramer of two MnmE and two MnmG subunits. The cofactor is FAD.

It is found in the cytoplasm. In terms of biological role, NAD-binding protein involved in the addition of a carboxymethylaminomethyl (cmnm) group at the wobble position (U34) of certain tRNAs, forming tRNA-cmnm(5)s(2)U34. This chain is tRNA uridine 5-carboxymethylaminomethyl modification enzyme MnmG, found in Endomicrobium trichonymphae.